The primary structure comprises 400 residues: Sensor histidine kinase LnrJ (400 aa).

Over 1–2 (MK) the chain is Extracellular. The helical transmembrane segment at 3–23 (ALFFTRMFTLMVSCLMYLSIV) threads the bilayer. Residues 24–27 (KEDN) are Cytoplasmic-facing. The chain crosses the membrane as a helical span at residues 28 to 48 (WFGYVFIAAGAAMYAANHVLL). Topologically, residues 49–61 (TKETNAIWFCLID) are extracellular. The chain crosses the membrane as a helical span at residues 62 to 82 (IAIGFSFGFIFPGTGLFIIML). Residues 83 to 101 (CPVAVAFFLRGFPKRTAWS) are Cytoplasmic-facing. The chain crosses the membrane as a helical span at residues 102-122 (VLCLSSILFLTVLIRTYAMFG). Over 123–125 (NEF) the chain is Extracellular. Residues 126-146 (VIDHLTSMTFVVFCGVVGKLI) form a helical membrane-spanning segment. The Cytoplasmic portion of the chain corresponds to 147 to 400 (RKLLDAQDTA…GPVQQKESLS (254 aa)). Residues 190 to 385 (IYERNRMARE…TVNAEFSLAN (196 aa)) enclose the Histidine kinase domain. Histidine 201 is modified (phosphohistidine; by autocatalysis).

Autophosphorylated.

It localises to the cell membrane. The catalysed reaction is ATP + protein L-histidine = ADP + protein N-phospho-L-histidine.. Functionally, required for resistance to linearmycins, a family of antibiotic-specialized metabolites produced by some streptomycetes. Member of the two-component regulatory system LnrJ/LnrK, which induces expression of the LnrLMN ABC transporter in response to linearmycins and other polyenes. Acts as a specific sensor for linearmycin, either directly through binding or indirectly through membrane perturbation. Probably activates LnrK by phosphorylation. May also promote biofilm formation. This is Sensor histidine kinase LnrJ from Bacillus subtilis (strain 168).